The following is a 59-amino-acid chain: Protein translocase subunit SecE (59 aa).

A helical transmembrane segment spans residues 33–53 (GAGIALVGLLGFIIFAVMTFV).

This sequence belongs to the SecE/SEC61-gamma family. In terms of assembly, component of the Sec protein translocase complex. Heterotrimer consisting of SecY (alpha), SecG (beta) and SecE (gamma) subunits. The heterotrimers can form oligomers, although 1 heterotrimer is thought to be able to translocate proteins. Interacts with the ribosome. May interact with SecDF, and other proteins may be involved.

Its subcellular location is the cell membrane. Its function is as follows. Essential subunit of the Sec protein translocation channel SecYEG. Clamps together the 2 halves of SecY. May contact the channel plug during translocation. The chain is Protein translocase subunit SecE from Haloarcula marismortui (strain ATCC 43049 / DSM 3752 / JCM 8966 / VKM B-1809) (Halobacterium marismortui).